The primary structure comprises 219 residues: Germin-like protein subfamily 2 member 1 (219 aa).

A signal peptide spans M1 to S21. C32 and C47 are oxidised to a cystine. Residues Q61–K209 form the Cupin type-1 domain. The N-linked (GlcNAc...) asparagine glycan is linked to N70. H109, H111, E116, and H155 together coordinate Mn(2+).

The protein belongs to the germin family. Oligomer (believed to be a pentamer but probably hexamer).

It is found in the secreted. The protein resides in the extracellular space. It localises to the apoplast. Its function is as follows. May play a role in plant defense. Probably has no oxalate oxidase activity even if the active site is conserved. The chain is Germin-like protein subfamily 2 member 1 (GLP4) from Arabidopsis thaliana (Mouse-ear cress).